Consider the following 287-residue polypeptide: Nucleotide-binding protein VV0445 (287 aa).

8–15 contacts ATP; sequence GHSGAGKS. A GTP-binding site is contributed by 56–59; the sequence is DVRN.

The protein belongs to the RapZ-like family.

Its function is as follows. Displays ATPase and GTPase activities. This is Nucleotide-binding protein VV0445 from Vibrio vulnificus (strain YJ016).